The following is a 206-amino-acid chain: Inner membrane-spanning protein YciB (206 aa).

A run of 5 helical transmembrane segments spans residues 50 to 70 (PILL…GYLL), 78 to 98 (GTLW…IYFH), 105 to 125 (WKPT…QIFL), 150 to 170 (LSWV…AFNF), and 173 to 193 (AAWV…FIII).

It belongs to the YciB family.

The protein resides in the cell inner membrane. Plays a role in cell envelope biogenesis, maintenance of cell envelope integrity and membrane homeostasis. This chain is Inner membrane-spanning protein YciB, found in Herminiimonas arsenicoxydans.